Consider the following 71-residue polypeptide: Disintegrin ussuristatin-2 (71 aa).

Residues 1–71 (EAGEECDCGA…QSADCPRNGF (71 aa)) enclose the Disintegrin domain. Disulfide bonds link cysteine 6/cysteine 21, cysteine 8/cysteine 16, cysteine 15/cysteine 38, cysteine 29/cysteine 35, cysteine 34/cysteine 59, and cysteine 47/cysteine 66. The short motif at 51-53 (KGD) is the Cell attachment site; atypical (KGD) element.

Belongs to the venom metalloproteinase (M12B) family. P-II subfamily. P-IId sub-subfamily. As to quaternary structure, homodimer. As to expression, expressed by the venom gland.

The protein resides in the secreted. Suppress platelet aggregation induced by ADP, collagen, thrombin, and epinephrine (IC(50)=170-330 nM). Also dose-dependently inhibits the adhesion of human melanoma cells to fibrinogen but not to fibronectin. In Gloydius ussuriensis (Ussuri mamushi), this protein is Disintegrin ussuristatin-2.